The chain runs to 1074 residues: DNA double-strand break repair Rad50 ATPase (1074 aa).

Residues arginine 12, 32 to 38 (NGSGKSS), and glutamine 142 each bind ATP. Coiled-coil stretches lie at residues 355–402 (ELEK…REKA) and 452–506 (NLVE…KGLG). Residues 512 to 611 (LENLEDFSEL…KITRLKDAKK (100 aa)) form the Zinc-hook domain. 2 residues coordinate Zn(2+): cysteine 559 and cysteine 562. Coiled-coil stretches lie at residues 574-611 (TAEE…DAKK), 649-678 (LKLE…LQVQ), 749-823 (KEKL…EILE), and 865-895 (TEEK…LKAL). 973-978 (LLSGGE) lines the ATP pocket.

This sequence belongs to the SMC family. RAD50 subfamily. In terms of assembly, homodimer. Forms a heterotetramer composed of two Mre11 subunits and two Rad50 subunits. Zn(2+) serves as cofactor.

Part of the Rad50/Mre11 complex, which is involved in the early steps of DNA double-strand break (DSB) repair. The complex may facilitate opening of the processed DNA ends to aid in the recruitment of HerA and NurA. Rad50 controls the balance between DNA end bridging and DNA resection via ATP-dependent structural rearrangements of the Rad50/Mre11 complex. The sequence is that of DNA double-strand break repair Rad50 ATPase from Methanosarcina acetivorans (strain ATCC 35395 / DSM 2834 / JCM 12185 / C2A).